A 430-amino-acid chain; its full sequence is Elongation factor Tu (430 aa).

Positions 13–220 (RPHLNIGTIG…ACDKYIALPE (208 aa)) constitute a tr-type G domain. Residues 22-29 (GHVDHGKT) are G1. 22-29 (GHVDHGKT) lines the GTP pocket. Residue Thr29 coordinates Mg(2+). The interval 66-70 (GITIS) is G2. Residues 87–90 (DCPG) form a G3 region. GTP-binding positions include 87–91 (DCPGH) and 142–145 (NKCD). A G4 region spans residues 142 to 145 (NKCD). A G5 region spans residues 188–190 (SAL).

It belongs to the TRAFAC class translation factor GTPase superfamily. Classic translation factor GTPase family. EF-Tu/EF-1A subfamily. In terms of assembly, monomer.

It localises to the cytoplasm. It carries out the reaction GTP + H2O = GDP + phosphate + H(+). GTP hydrolase that promotes the GTP-dependent binding of aminoacyl-tRNA to the A-site of ribosomes during protein biosynthesis. This chain is Elongation factor Tu, found in Neorickettsia sennetsu (strain ATCC VR-367 / Miyayama) (Ehrlichia sennetsu).